A 141-amino-acid chain; its full sequence is Hemoglobin subunit alpha-A (141 aa).

The Globin domain occupies 1 to 141 (VLSPADKSNV…VGTVLTAKYR (141 aa)). H58 is a binding site for O2. H87 is a heme b binding site.

It belongs to the globin family. In terms of assembly, heterotetramer of two alpha chains and two beta chains. Red blood cells.

Its function is as follows. Involved in oxygen transport from the lung to the various peripheral tissues. The protein is Hemoglobin subunit alpha-A (HBAA) of Passer montanus (Eurasian tree sparrow).